We begin with the raw amino-acid sequence, 1127 residues long: Nck-associated protein 1-like (1127 aa).

The tract at residues 638–670 (KAKNKKTRKQRQTPRKGEPERDKPGAESHRKNR) is disordered. A compositionally biased stretch (basic residues) spans 639–651 (AKNKKTRKQRQTP). Basic and acidic residues predominate over residues 652–666 (RKGEPERDKPGAESH). Residues 996–1016 (VACLLLIFLAVSLPLLATDPS) traverse the membrane as a helical segment.

Belongs to the HEM-1/HEM-2 family. As to quaternary structure, in hematopoietic cells, component of the WAVE2 complex composed of ABI1, CYFIP1/SRA1, NCKAP1L/HEM1 and WASF2/WAVE2. Interacts with ARHGAP4, PIK3C3/VPS34 and PPP1R12A/MYPT1. Interacts with mammalian target of rapamycin complex 2 (mTORC2) components, including MTOR and RICTOR. Expressed only in cells of hematopoietic origin. Expressed in neutrophils (at protein level). Expressed in T-cells (at protein level).

It is found in the cell membrane. The protein localises to the cytoplasm. In terms of biological role, essential hematopoietic-specific regulator of the actin cytoskeleton. Controls lymphocyte development, activation, proliferation and homeostasis, erythrocyte membrane stability, as well as phagocytosis and migration by neutrophils and macrophages. Component of the WAVE2 complex which signals downstream of RAC to stimulate F-actin polymerization. Required for stabilization and/or translation of the WAVE2 complex proteins in hematopoietic cells. Within the WAVE2 complex, enables the cortical actin network to restrain excessive degranulation and granule release by T-cells. Required for efficient T-lymphocyte and neutrophil migration. Exhibits complex cycles of activation and inhibition to generate waves of propagating the assembly with actin. Also involved in mechanisms WAVE-independent to regulate myosin and actin polymerization during neutrophil chemotaxis. In T-cells, required for proper mechanistic target of rapamycin complex 2 (mTORC2)-dependent AKT phosphorylation, cell proliferation and cytokine secretion, including that of IL2 and TNF. The protein is Nck-associated protein 1-like of Homo sapiens (Human).